A 205-amino-acid chain; its full sequence is Probable GTP-binding protein EngB (205 aa).

An EngB-type G domain is found at 29–203 (QGAEIAFIGR…KAVLSQWFRS (175 aa)). GTP contacts are provided by residues 37–44 (GRSNAGKS), 64–68 (GRTQM), 82–85 (DLPG), 149–152 (TKSD), and 182–184 (FSS). Mg(2+)-binding residues include Ser-44 and Thr-66.

Belongs to the TRAFAC class TrmE-Era-EngA-EngB-Septin-like GTPase superfamily. EngB GTPase family. Requires Mg(2+) as cofactor.

In terms of biological role, necessary for normal cell division and for the maintenance of normal septation. This chain is Probable GTP-binding protein EngB, found in Coxiella burnetii (strain RSA 331 / Henzerling II).